The chain runs to 155 residues: Large ribosomal subunit protein uL15 (155 aa).

The disordered stretch occupies residues 1 to 63 (MKLHELAPNP…QMPLTRRLPK (63 aa)). Gly residues-rich tracts occupy residues 21–31 (RGIGSGLGKTS) and 42–52 (SGGGVRPGFEG).

The protein belongs to the universal ribosomal protein uL15 family. Part of the 50S ribosomal subunit.

Its function is as follows. Binds to the 23S rRNA. The chain is Large ribosomal subunit protein uL15 from Symbiobacterium thermophilum (strain DSM 24528 / JCM 14929 / IAM 14863 / T).